We begin with the raw amino-acid sequence, 241 residues long: MESLDFTKAPPEFQEVKYLSDILLVTLASGWLVCYFATIRTAFCDRACWMPLLPLSCNVAWELVFITLYPPPGSPILGFWLLVNLGVIYSALRFAPSKASHLAVEKHYLPVLFVLAVGFWAWGHLALIEQLNPLPAFYYGGMACQLMTSAAALSGLVDQGSTQGASYTIWLSRVIGTSSALAGLFFRAHYWPSLWAWADNELMRWLAAAFGILDGVYGVQFWRLRRSENQLTIDHAHRKTE.

7 helical membrane passes run 19–39 (LSDILLVTLASGWLVCYFATI), 49–71 (WMPLLPLSCNVAWELVFITLYPP), 76–95 (ILGFWLLVNLGVIYSALRFA), 108–128 (YLPVLFVLAVGFWAWGHLALI), 137–157 (FYYGGMACQLMTSAAALSGLV), 166–186 (SYTIWLSRVIGTSSALAGLFF), and 202–222 (LMRWLAAAFGILDGVYGVQFW).

Belongs to the paxB family.

It localises to the membrane. It functions in the pathway secondary metabolite biosynthesis; terpenoid biosynthesis. Terpene cyclase; part of the gene cluster that mediates the biosynthesis of 15-deoxyoxalicine B. The first step of the pathway is the synthesis of nicotinyl-CoA from nicotinic acid by the nicotinic acid-CoA ligase olcI. Nicotinyl-CoA is then a substrate of polyketide synthase olcA to produce 4-hydroxy-6-(3-pyridinyl)-2H-pyran-2-one (HPPO) which is further prenylated by the polyprenyl transferase olcH to yield geranylgeranyl-HPPO. Geranylgeranyl pyrophosphate is provided by the cluster-specific geranylgeranyl pyrophosphate synthase olcC. The FAD-dependent monooxygenase olcE catalyzes the epoxidation of geranylgeranyl-HPPO and the terpene cyclase olcD catalyzes the cyclization of the terpenoid component, resulting in the formation of the tricyclic terpene moiety seen in predecaturin E. The cytochrome P450 monooxygenase then catalyzes the allylic oxidation of predecaturin E, which is followed by spirocylization with concomitant loss of one molecule of water to form decaturin E. Decaturin E is the substrate of the cytochrome P450 monooxygenase olcJ which hydroxylates it at the C-29 position to form decaturin F. The short-chain dehydrogenase/reductase olcF may catalyze the oxidation of decaturin F to generate the 29-hydroxyl-27-one intermediate, and subsequent hemiacetal formation probably leads to the formation of decaturin C. The dioxygenase olcK may be a peroxisomal enzyme that catalyzes the hydroxylation of decaturin C into decaturin A once decaturin C is shuttled into the peroxisome by the MFS transporter olcL. Finally the cytochrome P450 monooxygenase olcB catalyzes the oxidative rearrangement to yield 15-deoxyoxalicine B. In the absence of olcJ, decaturin E may be shunted to a pathway in which it is oxidized to a ketone, possibly by olcF, to form decaturin D, which undergoes further allylic oxidation to yield decaturin G. Moreover, in the absence of oclK or oclL, oclB can convert decaturin C into 15-deoxyoxalicine A. The chain is Terpene cyclase olcD from Penicillium canescens.